The primary structure comprises 306 residues: Reticulocalbin-2 (306 aa).

A signal peptide spans 1–22 (MESPTLLGLLLLLLGGPGTSLG). EF-hand domains are found at residues 50-85 (EQQK…SFKS), 86-121 (YIIE…RVID), 144-173 (KKRF…EEAD), 175-210 (MKEF…DPAA), 226-251 (NDYD…NNEG), and 252-287 (LAQE…FLNS). Positions 99, 101, 103, 105, and 110 each coordinate Ca(2+). Aspartate 188, aspartate 190, aspartate 192, glutamate 199, aspartate 229, aspartate 231, aspartate 233, lysine 235, glutamate 240, aspartate 265, aspartate 267, aspartate 269, arginine 271, and glutamate 276 together coordinate Ca(2+).

It belongs to the CREC family. May bind phospholipase A2, since the rat reticulocalbin-2 has been isolated on the phospholipase complex taipoxin columns. Expressed by the venom gland.

Its subcellular location is the secreted. The polypeptide is Reticulocalbin-2 (Crotalus adamanteus (Eastern diamondback rattlesnake)).